Here is a 598-residue protein sequence, read N- to C-terminus: Protein unc-93 homolog B1 (598 aa).

The interval 1–36 is disordered; the sequence is MEVEPPLYPVAGAAGPQGDEDRHGVPDGPEAPLDEL. Transmembrane regions (helical) follow at residues 64-84, 110-130, 132-152, 160-180, and 223-243; these read VLAA…LLQM, KMLM…PVLI, FFGT…FVST, TLVP…ASMG, and IFYS…IYFL. N-linked (GlcNAc...) asparagine glycans are attached at residues asparagine 251 and asparagine 272. The next 5 helical transmembrane spans lie at 285 to 305, 343 to 363, 378 to 398, 403 to 423, and 428 to 448; these read LIVV…MVLG, LVPF…GFAL, LLIA…LGLW, VPLV…FFWA, and VLQH…GSAL. An N-linked (GlcNAc...) asparagine glycan is attached at asparagine 449. The next 2 membrane-spanning stretches (helical) occupy residues 469–489 and 495–515; these read FIFT…YLGS and AKLA…LWME. Residues 524–598 form a disordered region; that stretch reads PRQPRIPKPQ…ALGGDGPEEQ (75 aa). The span at 544–554 shows a compositional bias: acidic residues; the sequence is EDNSDESDMEG. Phosphoserine is present on residues serine 547 and serine 550.

This sequence belongs to the unc-93 family. In terms of assembly, interacts with TLR3, TLR5, TLR7, TLR8, TLR9 and TLR13 (probably via transmembrane domain). Post-translationally, N-glycosylated.

The protein resides in the endoplasmic reticulum membrane. Its subcellular location is the endosome. It is found in the lysosome. The protein localises to the cytoplasmic vesicle. It localises to the phagosome. In terms of biological role, plays an important role in innate and adaptive immunity by regulating nucleotide-sensing Toll-like receptor (TLR) signaling. Required for the transport of a subset of TLRs (including TLR3, TLR7 and TLR9) from the endoplasmic reticulum to endolysosomes where they can engage pathogen nucleotides and activate signaling cascades. May play a role in autoreactive B-cells removal. In Mus musculus (Mouse), this protein is Protein unc-93 homolog B1.